The chain runs to 691 residues: Elongation factor G (691 aa).

Residues 8 to 283 form the tr-type G domain; that stretch reads EDYRNFGIMA…AVVDYLPTPI (276 aa). GTP contacts are provided by residues 17–24, 81–85, and 135–138; these read AHIDAGKT, DTPGH, and NKMD.

It belongs to the TRAFAC class translation factor GTPase superfamily. Classic translation factor GTPase family. EF-G/EF-2 subfamily.

The protein resides in the cytoplasm. Its function is as follows. Catalyzes the GTP-dependent ribosomal translocation step during translation elongation. During this step, the ribosome changes from the pre-translocational (PRE) to the post-translocational (POST) state as the newly formed A-site-bound peptidyl-tRNA and P-site-bound deacylated tRNA move to the P and E sites, respectively. Catalyzes the coordinated movement of the two tRNA molecules, the mRNA and conformational changes in the ribosome. This is Elongation factor G from Beijerinckia indica subsp. indica (strain ATCC 9039 / DSM 1715 / NCIMB 8712).